Reading from the N-terminus, the 1417-residue chain is DNA-directed RNA polymerase subunit beta' (1417 aa).

Residues C68, C70, C83, and C86 each coordinate Zn(2+). The Mg(2+) site is built by D458, D460, and D462. 4 residues coordinate Zn(2+): C811, C884, C891, and C894.

Belongs to the RNA polymerase beta' chain family. In terms of assembly, the RNAP catalytic core consists of 2 alpha, 1 beta, 1 beta' and 1 omega subunit. When a sigma factor is associated with the core the holoenzyme is formed, which can initiate transcription. It depends on Mg(2+) as a cofactor. Requires Zn(2+) as cofactor.

It carries out the reaction RNA(n) + a ribonucleoside 5'-triphosphate = RNA(n+1) + diphosphate. DNA-dependent RNA polymerase catalyzes the transcription of DNA into RNA using the four ribonucleoside triphosphates as substrates. The protein is DNA-directed RNA polymerase subunit beta' of Francisella tularensis subsp. novicida (strain U112).